The primary structure comprises 95 residues: MSYTITAQTRTEIGKGSSRRLRHAGKVPAVIYGAGKEAVSIEFEHRSIINIQTNDDFYNSDITIVLDGKEVKVRVQAMQRHAFKPMIEHVDFKFA.

Belongs to the bacterial ribosomal protein bL25 family. In terms of assembly, part of the 50S ribosomal subunit; part of the 5S rRNA/L5/L18/L25 subcomplex. Contacts the 5S rRNA. Binds to the 5S rRNA independently of L5 and L18.

In terms of biological role, this is one of the proteins that binds to the 5S RNA in the ribosome where it forms part of the central protuberance. This Shewanella loihica (strain ATCC BAA-1088 / PV-4) protein is Large ribosomal subunit protein bL25.